The following is a 317-amino-acid chain: Beta-ketoacyl-[acyl-carrier-protein] synthase III (317 aa).

Catalysis depends on residues Cys-112 and His-244. Residues 245 to 249 form an ACP-binding region; that stretch reads QANLR. Asn-274 is a catalytic residue.

This sequence belongs to the thiolase-like superfamily. FabH family. In terms of assembly, homodimer.

It is found in the cytoplasm. The catalysed reaction is malonyl-[ACP] + acetyl-CoA + H(+) = 3-oxobutanoyl-[ACP] + CO2 + CoA. It functions in the pathway lipid metabolism; fatty acid biosynthesis. Its function is as follows. Catalyzes the condensation reaction of fatty acid synthesis by the addition to an acyl acceptor of two carbons from malonyl-ACP. Catalyzes the first condensation reaction which initiates fatty acid synthesis and may therefore play a role in governing the total rate of fatty acid production. Possesses both acetoacetyl-ACP synthase and acetyl transacylase activities. Its substrate specificity determines the biosynthesis of branched-chain and/or straight-chain of fatty acids. This chain is Beta-ketoacyl-[acyl-carrier-protein] synthase III, found in Shigella boydii serotype 4 (strain Sb227).